Reading from the N-terminus, the 1296-residue chain is Aggregation substance (1296 aa).

Positions 1-43 (MKQQTEVKKRFKMYKAKKHWVVAPILFIGVLGVVGLATDDVQA) are cleaved as a signal peptide. Disordered regions lie at residues 48 to 188 (TQPG…KPAE) and 1221 to 1245 (HTPEKPQTPPEKTVIVPPTPKTPQA). Positions 89-99 (KVEEVASEKNG) are enriched in basic and acidic residues. Polar residues-rich tracts occupy residues 100–117 (AEQSSATPNDTTNAQQPT) and 125–138 (QEQPVVSPETTNEP). Over residues 160-178 (KEFETPDVDKAVDEAKKDP) the composition is skewed to basic and acidic residues. The LPXTG sorting signal motif lies at 1261–1265 (LPQTG). A Pentaglycyl murein peptidoglycan amidated threonine modification is found at T1264. Residues 1265-1296 (GEKQNVLLTVAGSLAAMLGLAGLGFKRRKETK) constitute a propeptide, removed by sortase.

This sequence belongs to the antigen I/II family.

It is found in the secreted. The protein localises to the cell wall. Aggregation substance allows donor and recipient strains to form tight aggregates which allow the non-motile bacteria to maintain physical contact over a period of time sufficient to permit conjugative transfer of the sex pheromone plasmid from donor to recipient strains. The sequence is that of Aggregation substance (asa1) from Enterococcus faecalis (strain ATCC 700802 / V583).